The sequence spans 328 residues: Beta-ketoacyl-[acyl-carrier-protein] synthase III (328 aa).

Residues cysteine 122 and histidine 255 contribute to the active site. Residues 256 to 260 (QANIR) are ACP-binding. Asparagine 285 is an active-site residue.

The protein belongs to the thiolase-like superfamily. FabH family. In terms of assembly, homodimer.

It is found in the cytoplasm. The enzyme catalyses malonyl-[ACP] + acetyl-CoA + H(+) = 3-oxobutanoyl-[ACP] + CO2 + CoA. The protein operates within lipid metabolism; fatty acid biosynthesis. Its function is as follows. Catalyzes the condensation reaction of fatty acid synthesis by the addition to an acyl acceptor of two carbons from malonyl-ACP. Catalyzes the first condensation reaction which initiates fatty acid synthesis and may therefore play a role in governing the total rate of fatty acid production. Possesses both acetoacetyl-ACP synthase and acetyl transacylase activities. Its substrate specificity determines the biosynthesis of branched-chain and/or straight-chain of fatty acids. This chain is Beta-ketoacyl-[acyl-carrier-protein] synthase III, found in Polynucleobacter asymbioticus (strain DSM 18221 / CIP 109841 / QLW-P1DMWA-1) (Polynucleobacter necessarius subsp. asymbioticus).